Consider the following 184-residue polypeptide: MNSETYWIISSNNWDLAESFGFNTNILETNLINLAVVIGVLVYFGKGVLTTILNNRKETILSTIRDAEERYQEAIEKLNQARTQLEQAKAKAEEIRVNGVLQMEREKQELIKAADEDSKRLEETKNLTIRFAEQKAIVQIRQQISRLTVKRALEIINSRLNLDLHARMIDYHIGLFKAMKTSAE.

The chain crosses the membrane as a helical span at residues 31–53 (LINLAVVIGVLVYFGKGVLTTIL).

The protein belongs to the ATPase B chain family. As to quaternary structure, F-type ATPases have 2 components, F(1) - the catalytic core - and F(0) - the membrane proton channel. F(1) has five subunits: alpha(3), beta(3), gamma(1), delta(1), epsilon(1). F(0) has four main subunits: a(1), b(1), b'(1) and c(10-14). The alpha and beta chains form an alternating ring which encloses part of the gamma chain. F(1) is attached to F(0) by a central stalk formed by the gamma and epsilon chains, while a peripheral stalk is formed by the delta, b and b' chains.

It is found in the plastid. Its subcellular location is the chloroplast thylakoid membrane. Functionally, f(1)F(0) ATP synthase produces ATP from ADP in the presence of a proton or sodium gradient. F-type ATPases consist of two structural domains, F(1) containing the extramembraneous catalytic core and F(0) containing the membrane proton channel, linked together by a central stalk and a peripheral stalk. During catalysis, ATP synthesis in the catalytic domain of F(1) is coupled via a rotary mechanism of the central stalk subunits to proton translocation. Component of the F(0) channel, it forms part of the peripheral stalk, linking F(1) to F(0). In Staurastrum punctulatum (Green alga), this protein is ATP synthase subunit b, chloroplastic.